A 130-amino-acid polypeptide reads, in one-letter code: Holo-[acyl-carrier-protein] synthase (130 aa).

Residues Asp9 and Glu58 each contribute to the Mg(2+) site.

This sequence belongs to the P-Pant transferase superfamily. AcpS family. Mg(2+) is required as a cofactor.

It is found in the cytoplasm. The enzyme catalyses apo-[ACP] + CoA = holo-[ACP] + adenosine 3',5'-bisphosphate + H(+). Functionally, transfers the 4'-phosphopantetheine moiety from coenzyme A to a Ser of acyl-carrier-protein. This is Holo-[acyl-carrier-protein] synthase from Mycobacterium tuberculosis (strain CDC 1551 / Oshkosh).